Consider the following 266-residue polypeptide: Bidirectional sugar transporter SWEET7b (266 aa).

At M1–N9 the chain is on the extracellular side. The chain crosses the membrane as a helical span at residues M10–F30. The 88-residue stretch at M10–K97 folds into the MtN3/slv 1 domain. Topologically, residues Y31–D45 are cytoplasmic. The chain crosses the membrane as a helical span at residues P46–H66. At P67–S69 the chain is on the extracellular side. The helical transmembrane segment at I70 to F90 threads the bilayer. Residues F91–K101 are Cytoplasmic-facing. A helical membrane pass occupies residues M102–L122. At G123 to S131 the chain is on the extracellular side. Residues L132–I152 form a helical membrane-spanning segment. The region spanning I133–T216 is the MtN3/slv 2 domain. At M153–M165 the chain is on the cytoplasmic side. The chain crosses the membrane as a helical span at residues P166 to I186. At R187–D189 the chain is on the extracellular side. The chain crosses the membrane as a helical span at residues I190–Y210. Over A211 to P266 the chain is Cytoplasmic.

This sequence belongs to the SWEET sugar transporter family. As to quaternary structure, forms homooligomers and/or heterooligomers.

The protein resides in the cell membrane. Its function is as follows. Mediates both low-affinity uptake and efflux of sugar across the plasma membrane. In Oryza sativa subsp. indica (Rice), this protein is Bidirectional sugar transporter SWEET7b (SWEET7B).